A 319-amino-acid chain; its full sequence is sn-1-specific diacylglycerol lipase ABHD11 (319 aa).

The N-terminal 28 residues, 1–28 (MTLKLAVLRQIFQGSKGWHLWQHWRAFY), are a transit peptide targeting the mitochondrion. Positions 69-304 (PPLVLLHGLF…GAGHWVHADK (236 aa)) constitute an AB hydrolase-1 domain. Active-site charge relay system residues include Ser143, Glu239, and His298.

Belongs to the AB hydrolase superfamily. In terms of processing, phosphorylated.

The protein resides in the mitochondrion. It localises to the mitochondrion matrix. It carries out the reaction 1-octadecanoyl-2-(5Z,8Z,11Z,14Z-eicosatetraenoyl)-sn-glycerol + H2O = 2-(5Z,8Z,11Z,14Z-eicosatetraenoyl)-glycerol + octadecanoate + H(+). It catalyses the reaction a 1,2-diacyl-sn-glycerol + H2O = a 2-acylglycerol + a fatty acid + H(+). The catalysed reaction is a 1,3-diacyl-sn-glycerol + H2O = a 1-acyl-sn-glycerol + a fatty acid + H(+). The enzyme catalyses 1-octadecanoyl-2-(9Z-octadecenoyl)-sn-glycerol + H2O = 2-(9Z-octadecenoyl)-glycerol + octadecanoate + H(+). It carries out the reaction 1-octadecanoyl-2-(4Z,7Z,10Z,13Z,16Z,19Z-docosahexaenoyl)-sn-glycerol + H2O = 2-(4Z,7Z,10Z,13Z,16Z,19Z-docosahexaenoyl)-glycerol + octadecanoate + H(+). It catalyses the reaction 1,2-didecanoylglycerol + H2O = decanoylglycerol + decanoate + H(+). In terms of biological role, catalyzes the hydrolysis of diacylglycerol in vitro and may function as a key regulator in lipid metabolism, namely by regulating the intracellular levels of diacylglycerol. 1,2-diacyl-sn-glycerols are the preferred substrate over 1,3-diacyl-sn-glycerols. The enzyme hydrolyzes stearate in preference to palmitate from the sn-1 position of 1,2-diacyl-sn-glycerols. This Xenopus tropicalis (Western clawed frog) protein is sn-1-specific diacylglycerol lipase ABHD11.